A 373-amino-acid polypeptide reads, in one-letter code: GTP cyclohydrolase 1 type 2 homolog (373 aa).

H68, H69, D107, H333, and E336 together coordinate a divalent metal cation.

The protein belongs to the GTP cyclohydrolase I type 2/NIF3 family. As to quaternary structure, homohexamer.

This Bacillus subtilis (strain 168) protein is GTP cyclohydrolase 1 type 2 homolog (yqfO).